The chain runs to 2183 residues: Genome polyprotein (2183 aa).

Residue Gly-2 is the site of N-myristoyl glycine; by host attachment. Residues 2 to 1493 (GAQVSTQKTG…HVSRAFICLQ (1492 aa)) are Cytoplasmic-facing. Positions 566–582 (FYQGPTEESVERAMGRV) are amphipathic alpha-helix. Active-site for protease 2A activity residues include His-870 and Asp-888. Zn(2+) contacts are provided by Cys-905 and Cys-907. Cys-959 functions as the For protease 2A activity in the catalytic mechanism. Residues Cys-965 and His-967 each coordinate Zn(2+). The interval 1099–1171 (NNNWLKKFTE…EQSAPSQSDQ (73 aa)) is membrane-binding. The tract at residues 1099 to 1237 (NNNWLKKFTE…SPGAGKSVAT (139 aa)) is oligomerization. An RNA-binding region spans residues 1120–1124 (AVKIQ). In terms of domain architecture, SF3 helicase spans 1203–1359 (EKKMSNYIQF…SMYSQNGKIN (157 aa)). Zn(2+) contacts are provided by Cys-1367, Cys-1379, and Cys-1384. Residues 1367–1384 (CDEECCPVNFKKCCPLVC) form a C4-type; degenerate zinc finger. The interval 1411 to 1418 (EYNHRHSV) is RNA-binding. The oligomerization stretch occupies residues 1422–1427 (LEALFQ). Residues 1494 to 1509 (ALTTFVSVAGIIYIIY) lie within the membrane without spanning it. Over 1510–2183 (KLFAGFQGAY…TLRRKWLDAF (674 aa)) the chain is Cytoplasmic. At Tyr-1519 the chain carries O-(5'-phospho-RNA)-tyrosine. Positions 1539–1717 (GPAFEFAVAM…FSASLLRHYF (179 aa)) constitute a Peptidase C3 domain. Active-site for protease 3C activity residues include His-1578, Glu-1609, and Cys-1685. One can recognise a RdRp catalytic domain in the interval 1948–2064 (GHLRAFDYSG…SYPLPIDASL (117 aa)). 2 residues coordinate Mg(2+): Asp-1954 and Asp-2050.

Belongs to the picornaviruses polyprotein family. Interacts with capsid protein VP1 and capsid protein VP3 to form heterotrimeric protomers. As to quaternary structure, interacts with capsid protein VP0, and capsid protein VP3 to form heterotrimeric protomers. Five protomers subsequently associate to form pentamers which serve as building blocks for the capsid. Interacts with capsid protein VP2, capsid protein VP3 and capsid protein VP4 following cleavage of capsid protein VP0. Interacts with host CXADR. In terms of assembly, interacts with capsid protein VP1 and capsid protein VP3 in the mature capsid. Interacts with capsid protein VP0 and capsid protein VP1 to form heterotrimeric protomers. Five protomers subsequently associate to form pentamers which serve as building blocks for the capsid. Interacts with capsid protein VP4 in the mature capsid. Interacts with protein 2C; this interaction may be important for virion morphogenesis. As to quaternary structure, interacts with capsid protein VP1 and capsid protein VP3. In terms of assembly, homodimer. Homohexamer; forms a hexameric ring structure with 6-fold symmetry characteristic of AAA+ ATPases. Interacts (via N-terminus) with host RTN3 (via reticulon domain); this interaction is important for viral replication. Interacts with capsid protein VP3; this interaction may be important for virion morphogenesis. As to quaternary structure, interacts with protein 3CD. In terms of assembly, homodimer. Interacts with host GBF1. Interacts (via GOLD domain) with host ACBD3 (via GOLD domain); this interaction allows the formation of a viral protein 3A/ACBD3 heterotetramer with a 2:2 stoichiometry, which will stimulate the recruitment of host PI4KB in order to synthesize PI4P at the viral RNA replication sites. Interacts with RNA-directed RNA polymerase. As to quaternary structure, interacts with protein 3AB and with RNA-directed RNA polymerase. In terms of assembly, interacts with Viral protein genome-linked and with protein 3CD. The cofactor is Mg(2+). Post-translationally, specific enzymatic cleavages in vivo by the viral proteases yield processing intermediates and the mature proteins. Myristoylation is required for the formation of pentamers during virus assembly. Further assembly of 12 pentamers and a molecule of genomic RNA generates the provirion. In terms of processing, during virion maturation, immature virions are rendered infectious following cleavage of VP0 into VP4 and VP2. This maturation seems to be an autocatalytic event triggered by the presence of RNA in the capsid and it is followed by a conformational change infectious virion. Post-translationally, myristoylation is required during RNA encapsidation and formation of the mature virus particle. VPg is uridylylated by the polymerase into VPg-pUpU. This acts as a nucleotide-peptide primer for the genomic RNA replication.

The protein resides in the virion. Its subcellular location is the host cytoplasm. It is found in the host cytoplasmic vesicle membrane. It localises to the host nucleus. The catalysed reaction is a ribonucleoside 5'-triphosphate + H2O = a ribonucleoside 5'-diphosphate + phosphate + H(+). It catalyses the reaction Selective cleavage of Tyr-|-Gly bond in the picornavirus polyprotein.. It carries out the reaction RNA(n) + a ribonucleoside 5'-triphosphate = RNA(n+1) + diphosphate. The enzyme catalyses Selective cleavage of Gln-|-Gly bond in the poliovirus polyprotein. In other picornavirus reactions Glu may be substituted for Gln, and Ser or Thr for Gly.. Replication or transcription is subject to high level of random mutations by the nucleotide analog ribavirin. Functionally, forms an icosahedral capsid of pseudo T=3 symmetry with capsid proteins VP2 and VP3. The capsid is 300 Angstroms in diameter, composed of 60 copies of each capsid protein and enclosing the viral positive strand RNA genome. Capsid protein VP1 mainly forms the vertices of the capsid. Capsid protein VP1 interacts with host CXADR to provide virion attachment to target host cells. This attachment induces virion internalization. Tyrosine kinases are probably involved in the entry process. After binding to its receptor, the capsid undergoes conformational changes. Capsid protein VP1 N-terminus (that contains an amphipathic alpha-helix) and capsid protein VP4 are externalized. Together, they shape a pore in the host membrane through which viral genome is translocated to host cell cytoplasm. Forms an icosahedral capsid of pseudo T=3 symmetry with capsid proteins VP2 and VP3. The capsid is 300 Angstroms in diameter, composed of 60 copies of each capsid protein and enclosing the viral positive strand RNA genome. Its function is as follows. Lies on the inner surface of the capsid shell. After binding to the host receptor, the capsid undergoes conformational changes. Capsid protein VP4 is released, Capsid protein VP1 N-terminus is externalized, and together, they shape a pore in the host membrane through which the viral genome is translocated into the host cell cytoplasm. In terms of biological role, component of immature procapsids, which is cleaved into capsid proteins VP4 and VP2 after maturation. Allows the capsid to remain inactive before the maturation step. Functionally, cysteine protease that cleaves viral polyprotein and specific host proteins. It is responsible for the autocatalytic cleavage between the P1 and P2 regions, which is the first cleavage occurring in the polyprotein. Also cleaves the host translation initiation factor EIF4G1, in order to shut down the capped cellular mRNA translation. Inhibits the host nucleus-cytoplasm protein and RNA trafficking by cleaving host members of the nuclear pores. Counteracts stress granule formation probably by antagonizing its assembly or promoting its dissassembly. Cleaves and inhibits host IFIH1/MDA5, thereby inhibiting the type-I IFN production and the establishment of the antiviral state. Cleaves and inhibits host MAVS, thereby inhibiting the type-I IFN production and the establishment of the antiviral state. Plays an essential role in the virus replication cycle by acting as a viroporin. Creates a pore in the host endoplasmic reticulum and as a consequence releases Ca2+ in the cytoplasm of infected cell. In turn, high levels of cytoplasmic calcium may trigger membrane trafficking and transport of viral ER-associated proteins to viroplasms, sites of viral genome replication. Its function is as follows. Induces and associates with structural rearrangements of intracellular membranes. Displays RNA-binding, nucleotide binding and NTPase activities. May play a role in virion morphogenesis and viral RNA encapsidation by interacting with the capsid protein VP3. In terms of biological role, localizes the viral replication complex to the surface of membranous vesicles. Together with protein 3CD binds the Cis-Active RNA Element (CRE) which is involved in RNA synthesis initiation. Acts as a cofactor to stimulate the activity of 3D polymerase, maybe through a nucleid acid chaperone activity. Functionally, localizes the viral replication complex to the surface of membranous vesicles. It inhibits host cell endoplasmic reticulum-to-Golgi apparatus transport and causes the disassembly of the Golgi complex, possibly through GBF1 interaction. This would result in depletion of MHC, trail receptors and IFN receptors at the host cell surface. Plays an essential role in viral RNA replication by recruiting ACBD3 and PI4KB at the viral replication sites, thereby allowing the formation of the rearranged membranous structures where viral replication takes place. Acts as a primer for viral RNA replication and remains covalently bound to viral genomic RNA. VPg is uridylylated prior to priming replication into VPg-pUpU. The oriI viral genomic sequence may act as a template for this. The VPg-pUpU is then used as primer on the genomic RNA poly(A) by the RNA-dependent RNA polymerase to replicate the viral genome. During genome replication, the VPg-RNA linkage is removed by the host TDP2, thereby accelerating replication. During the late stage of the replication cycle, host TDP2 is excluded from sites of viral RNA synthesis and encapsidation, allowing for the generation of progeny virions. Its function is as follows. Involved in the viral replication complex and viral polypeptide maturation. It exhibits protease activity with a specificity and catalytic efficiency that is different from protease 3C. Protein 3CD lacks polymerase activity. Protein 3CD binds to the 5'UTR of the viral genome. In terms of biological role, replicates the viral genomic RNA on the surface of intracellular membranes. May form linear arrays of subunits that propagate along a strong head-to-tail interaction called interface-I. Covalently attaches UMP to a tyrosine of VPg, which is used to prime RNA synthesis. The positive stranded RNA genome is first replicated at virus induced membranous vesicles, creating a dsRNA genomic replication form. This dsRNA is then used as template to synthesize positive stranded RNA genomes. ss(+)RNA genomes are either translated, replicated or encapsidated. Functionally, major viral protease that mediates proteolytic processing of the polyprotein. Cleaves host EIF5B, contributing to host translation shutoff. Also cleaves host PABPC1, contributing to host translation shutoff. Cleaves host NLRP1, triggers host N-glycine-mediated degradation of the autoinhibitory NLRP1 N-terminal fragment. The sequence is that of Genome polyprotein from Coxsackievirus B4 (strain E2).